A 206-amino-acid polypeptide reads, in one-letter code: Sortase A (206 aa).

Over 1–6 (MKKWTN) the chain is Cytoplasmic. Residues 7–24 (RLMTIAGVVLILVAAYLF) traverse the membrane as a helical segment. The Extracellular segment spans residues 25 to 206 (AKPHIDNYLH…RKIFVATEVK (182 aa)). Residues 49-69 (VKEQASKDKKQQAKPQIPKDK) form a disordered region. Positions 105, 108, 112, and 114 each coordinate Ca(2+). Histidine 120 (proton donor/acceptor) is an active-site residue. Glutamate 171 is a binding site for Ca(2+). Residue cysteine 184 is the Acyl-thioester intermediate of the active site.

It belongs to the bacterial sortase family. Class A subfamily. As to quaternary structure, monomer and homodimer; in equilibrium.

It is found in the cell membrane. The enzyme catalyses The enzyme catalyzes a cell wall sorting reaction in which a surface protein with a sorting signal containing a LPXTG motif is cleaved between the Thr and Gly residue. The resulting threonine carboxyl end of the protein is covalently attached to a pentaglycine cross-bridge of peptidoglycan.. With respect to regulation, sortase activity is regulated by monomer-homodimer equilibrium. Mutant cells with monomeric SrtA display more adhesive proteins on the cell surface and are more invasive than wild-type cells, which have majority of SrtA in dimeric form. Dimerization may suppress the enzymatic activity on cell membranes. Stimulated by calcium ions, which promote substrate binding. Calcium ions bind to SrtA and modulate both the structure and dynamics of a large active site loop. Can also be stimulated, to a lesser extent, by Mg(2+) and Mn(2+). Inhibited by sulfhydryl-modifying reagents. Transpeptidase that anchors surface proteins to the cell wall. Recognizes and modifies its substrate by proteolytic cleavage of a C-terminal sorting signal. Following cleavage, a covalent intermediate is formed via a thioester bond between the sortase and its substrate, which is then transferred and covalently attached to the cell wall. This sortase recognizes a Leu-Pro-x-Thr-Gly (LPXTG) motif, which is cleaved by the sortase between the threonine and glycine residues. Utilizes lipid II as the peptidoglycan substrate for the sorting reaction. Responsible for the display of important virulence factors. Important for interactions with the host and host colonization during infection. This is Sortase A from Staphylococcus aureus (strain NCTC 8325 / PS 47).